Here is a 134-residue protein sequence, read N- to C-terminus: Large ribosomal subunit protein bL20 (134 aa).

The protein belongs to the bacterial ribosomal protein bL20 family.

Its function is as follows. Binds directly to 23S ribosomal RNA and is necessary for the in vitro assembly process of the 50S ribosomal subunit. It is not involved in the protein synthesizing functions of that subunit. This Rhizobium leguminosarum bv. trifolii (strain WSM2304) protein is Large ribosomal subunit protein bL20.